Consider the following 173-residue polypeptide: Signal peptidase complex catalytic subunit SEC11 (173 aa).

The Cytoplasmic portion of the chain corresponds to Met1–Gln15. The chain crosses the membrane as a helical; Signal-anchor for type II membrane protein span at residues Ile16–Val36. Residues Ser37–Glu173 are Lumenal-facing. Catalysis depends on charge relay system residues Ser50, His89, and Asp115. The tract at residues Val159–Leu170 is C-terminal short (CTS) helix.

It belongs to the peptidase S26B family. Component of the signal peptidase complex (SPC) composed of a catalytic subunit SEC11 and three accessory subunits SPC1, SPC2 and SPC3. The complex induces a local thinning of the ER membrane which is used to measure the length of the signal peptide (SP) h-region of protein substrates. This ensures the selectivity of the complex towards h-regions shorter than 18-20 amino acids. SPC associates with the translocon complex.

Its subcellular location is the endoplasmic reticulum membrane. The catalysed reaction is Cleavage of hydrophobic, N-terminal signal or leader sequences from secreted and periplasmic proteins.. In terms of biological role, catalytic component of the signal peptidase complex (SPC) which catalyzes the cleavage of N-terminal signal sequences from nascent proteins as they are translocated into the lumen of the endoplasmic reticulum. Specifically cleaves N-terminal signal peptides that contain a hydrophobic alpha-helix (h-region) shorter than 18-20 amino acids. The protein is Signal peptidase complex catalytic subunit SEC11 (SEC11) of Leptosphaeria maculans (strain JN3 / isolate v23.1.3 / race Av1-4-5-6-7-8) (Blackleg fungus).